The primary structure comprises 275 residues: MANIKAKKYYSYAKINLFLHILNKRTDGYHNLQTWFTFLDLKDQLIFSFNNSREINISSNISIAAKQDNLVYKAIKKFQQSYRVQDIGVDIEIKKNIPMGAGLGGGSSNAATTLIALRDYYLPQLSNEEMIPLAAKLGADVPIFVYGKSAWAEGIGEILYHKDFSPQYALLIKPDIHISTKEFFVSEDLIKSSVLISKDLGFDKSIMHNDFENVFYAKYPEFSQYLKELDSDFRMTGTGSCFYLLSADKNKLEQLARKINKPLDKWLVKTLNYVY.

Lysine 14 is an active-site residue. An ATP-binding site is contributed by 98 to 108 (PMGAGLGGGSS). Aspartate 140 is an active-site residue.

This sequence belongs to the GHMP kinase family. IspE subfamily.

It catalyses the reaction 4-CDP-2-C-methyl-D-erythritol + ATP = 4-CDP-2-C-methyl-D-erythritol 2-phosphate + ADP + H(+). It participates in isoprenoid biosynthesis; isopentenyl diphosphate biosynthesis via DXP pathway; isopentenyl diphosphate from 1-deoxy-D-xylulose 5-phosphate: step 3/6. Its function is as follows. Catalyzes the phosphorylation of the position 2 hydroxy group of 4-diphosphocytidyl-2C-methyl-D-erythritol. The polypeptide is 4-diphosphocytidyl-2-C-methyl-D-erythritol kinase (Francisella tularensis subsp. novicida (strain U112)).